Consider the following 795-residue polypeptide: Phenylalanine--tRNA ligase beta subunit (795 aa).

The 110-residue stretch at 39–148 (AGSFNGVVVG…ADAPLGTDIR (110 aa)) folds into the tRNA-binding domain. A B5 domain is found at 401-476 (PKRATITLRR…RVYGYNNIPD (76 aa)). Residues Asp-454, Asp-460, Glu-463, and Glu-464 each coordinate Mg(2+). The FDX-ACB domain maps to 701–794 (SRFPANRRDI…LKERFQASLR (94 aa)).

This sequence belongs to the phenylalanyl-tRNA synthetase beta subunit family. Type 1 subfamily. As to quaternary structure, tetramer of two alpha and two beta subunits. The cofactor is Mg(2+).

The protein resides in the cytoplasm. It carries out the reaction tRNA(Phe) + L-phenylalanine + ATP = L-phenylalanyl-tRNA(Phe) + AMP + diphosphate + H(+). The protein is Phenylalanine--tRNA ligase beta subunit of Salmonella paratyphi A (strain ATCC 9150 / SARB42).